The sequence spans 135 residues: HVA22-like protein d (135 aa).

Helical transmembrane passes span 11–31 (LHSGAGPIVMLLYPLYASVIA), 42–62 (QWLAYWIIYSFLSLTELILQS), and 63–83 (LIEWIPIWYTVKLVFVAWLVL).

This sequence belongs to the DP1 family. Predominantly expressed in flower buds.

It is found in the membrane. The sequence is that of HVA22-like protein d (HVA22D) from Arabidopsis thaliana (Mouse-ear cress).